Consider the following 235-residue polypeptide: Ribonuclease 3 (235 aa).

In terms of domain architecture, RNase III spans 8–137 (PAELARRIGI…VIGAIFLSGG (130 aa)). Position 50 (Glu50) interacts with Mg(2+). Asp54 is an active-site residue. Mg(2+) contacts are provided by Asp123 and Glu126. Glu126 is an active-site residue. Residues 163 to 232 (DNKTAFQEWV…AGRAMREWAG (70 aa)) form the DRBM domain. The interval 211 to 235 (QGRTKKEAEQQAAGRAMREWAGRKG) is disordered. Basic and acidic residues predominate over residues 226-235 (AMREWAGRKG).

It belongs to the ribonuclease III family. Homodimer. The cofactor is Mg(2+).

The protein resides in the cytoplasm. It carries out the reaction Endonucleolytic cleavage to 5'-phosphomonoester.. Functionally, digests double-stranded RNA. Involved in the processing of primary rRNA transcript to yield the immediate precursors to the large and small rRNAs (23S and 16S). Processes some mRNAs, and tRNAs when they are encoded in the rRNA operon. Processes pre-crRNA and tracrRNA of type II CRISPR loci if present in the organism. This Heliobacterium modesticaldum (strain ATCC 51547 / Ice1) protein is Ribonuclease 3.